The chain runs to 877 residues: DNA repair protein rad16 (877 aa).

Residue serine 71 is modified to Phosphoserine; by CK2. Residues 440 to 490 form a disordered region; the sequence is SKSIKKPEPSKEREASNTTSRKGVPPSKRRRVRGGNNATSRTTSDNTDAND. Residues 444 to 454 are compositionally biased toward basic and acidic residues; that stretch reads KKPEPSKEREA. Positions 475–490 are enriched in polar residues; the sequence is NNATSRTTSDNTDAND. One can recognise an ERCC4 domain in the interval 652–732; the sequence is RVIVDLREFR…IPVLLIEFEQ (81 aa).

This sequence belongs to the XPF family. In terms of assembly, heterodimer composed of rad16 and swi10.

The protein localises to the nucleus. It is found in the cytoplasm. It localises to the cytoskeleton. Its subcellular location is the microtubule organizing center. The protein resides in the spindle pole body. In terms of biological role, endonuclease that specifically degrades single-stranded DNA and which is involved in nucleotide excision repair of DNA damaged with UV light, bulky adducts, or cross-linking agents. Required for double strand break-induced interchromosomal gene conversion. The chain is DNA repair protein rad16 (rad16) from Schizosaccharomyces pombe (strain 972 / ATCC 24843) (Fission yeast).